A 554-amino-acid polypeptide reads, in one-letter code: Membrane protein insertase YidC (554 aa).

5 helical membrane passes run V7 to Q24, F362 to F382, L436 to V456, P475 to P495, and P510 to V530.

The protein belongs to the OXA1/ALB3/YidC family. Type 1 subfamily. In terms of assembly, interacts with the Sec translocase complex via SecD. Specifically interacts with transmembrane segments of nascent integral membrane proteins during membrane integration.

The protein resides in the cell inner membrane. In terms of biological role, required for the insertion and/or proper folding and/or complex formation of integral membrane proteins into the membrane. Involved in integration of membrane proteins that insert both dependently and independently of the Sec translocase complex, as well as at least some lipoproteins. Aids folding of multispanning membrane proteins. The sequence is that of Membrane protein insertase YidC from Burkholderia ambifaria (strain MC40-6).